A 277-amino-acid polypeptide reads, in one-letter code: S-formylglutathione hydrolase FrmB (277 aa).

Active-site charge relay system residues include Ser-145, Asp-221, and His-254.

The protein belongs to the esterase D family.

It carries out the reaction S-formylglutathione + H2O = formate + glutathione + H(+). In terms of biological role, serine hydrolase involved in the detoxification of formaldehyde. Hydrolyzes S-formylglutathione to glutathione and formate. The sequence is that of S-formylglutathione hydrolase FrmB (frmB) from Escherichia coli (strain SMS-3-5 / SECEC).